We begin with the raw amino-acid sequence, 129 residues long: Large ribosomal subunit protein bL21 (129 aa).

The protein belongs to the bacterial ribosomal protein bL21 family. In terms of assembly, part of the 50S ribosomal subunit. Contacts protein L20.

In terms of biological role, this protein binds to 23S rRNA in the presence of protein L20. This Prochlorococcus marinus (strain MIT 9313) protein is Large ribosomal subunit protein bL21.